A 525-amino-acid chain; its full sequence is ATP synthase subunit alpha (525 aa).

ATP is bound at residue 169-176; sequence GDRQTGKT.

The protein belongs to the ATPase alpha/beta chains family. As to quaternary structure, F-type ATPases have 2 components, CF(1) - the catalytic core - and CF(0) - the membrane proton channel. CF(1) has five subunits: alpha(3), beta(3), gamma(1), delta(1), epsilon(1). CF(0) has three main subunits: a(1), b(2) and c(9-12). The alpha and beta chains form an alternating ring which encloses part of the gamma chain. CF(1) is attached to CF(0) by a central stalk formed by the gamma and epsilon chains, while a peripheral stalk is formed by the delta and b chains.

Its subcellular location is the cell membrane. The enzyme catalyses ATP + H2O + 4 H(+)(in) = ADP + phosphate + 5 H(+)(out). Functionally, produces ATP from ADP in the presence of a proton gradient across the membrane. The alpha chain is a regulatory subunit. This Mesoplasma florum (strain ATCC 33453 / NBRC 100688 / NCTC 11704 / L1) (Acholeplasma florum) protein is ATP synthase subunit alpha.